The chain runs to 65 residues: uncharacterized protein (65 aa).

The N-terminal stretch at 1–16 (MMHVCSLLVSFDVVKS) is a signal peptide.

This is an uncharacterized protein from Saccharomyces cerevisiae (strain ATCC 204508 / S288c) (Baker's yeast).